We begin with the raw amino-acid sequence, 206 residues long: Outer-membrane lipoprotein carrier protein (206 aa).

A signal peptide spans 1–21 (MKKLLCAVLLSPLLYSNAVLA).

This sequence belongs to the LolA family. As to quaternary structure, monomer.

It localises to the periplasm. Functionally, participates in the translocation of lipoproteins from the inner membrane to the outer membrane. Only forms a complex with a lipoprotein if the residue after the N-terminal Cys is not an aspartate (The Asp acts as a targeting signal to indicate that the lipoprotein should stay in the inner membrane). The chain is Outer-membrane lipoprotein carrier protein from Shewanella sp. (strain MR-4).